Reading from the N-terminus, the 113-residue chain is U11-theraphotoxin-Hhn1h (113 aa).

An N-terminal signal peptide occupies residues 1–21 (MNTVRVTFLLVFVLVVSLGQA). Residues 22–74 (DKDENRMEMQEKTEQGKSYLDFAENLLLQKLEELEAKLLEEDSEESRNSRQKR) constitute a propeptide that is removed on maturation. The tract at residues 61-83 (EEDSEESRNSRQKRRIGEGVPCD) is disordered. Disulfide bonds link Cys82–Cys95 and Cys89–Cys110.

It belongs to the neurotoxin 14 (magi-1) family. 01 (HNTX-16) subfamily. Expressed by the venom gland.

It is found in the secreted. Probable ion channel inhibitor. The sequence is that of U11-theraphotoxin-Hhn1h from Cyriopagopus hainanus (Chinese bird spider).